The chain runs to 555 residues: CTP synthase (555 aa).

Residues 1-279 (MATNRAKSST…DNYIIRRLNL (279 aa)) are amidoligase domain. Serine 21 contacts CTP. Serine 21 contacts UTP. ATP is bound by residues 22–27 (SLGKGL) and aspartate 79. Positions 79 and 153 each coordinate Mg(2+). CTP is bound by residues 160 to 162 (DIE), 200 to 205 (KTKPTQ), and lysine 236. Residues 200 to 205 (KTKPTQ) and lysine 236 contribute to the UTP site. The 250-residue stretch at 304 to 553 (TIGIVGKYID…VDAALKHQAG (250 aa)) folds into the Glutamine amidotransferase type-1 domain. Glycine 367 contributes to the L-glutamine binding site. Cysteine 394 functions as the Nucleophile; for glutamine hydrolysis in the catalytic mechanism. Residues 395-398 (LGLQ), glutamate 417, and arginine 478 each bind L-glutamine. Residues histidine 526 and glutamate 528 contribute to the active site.

This sequence belongs to the CTP synthase family. Homotetramer.

It catalyses the reaction UTP + L-glutamine + ATP + H2O = CTP + L-glutamate + ADP + phosphate + 2 H(+). It carries out the reaction L-glutamine + H2O = L-glutamate + NH4(+). The catalysed reaction is UTP + NH4(+) + ATP = CTP + ADP + phosphate + 2 H(+). It functions in the pathway pyrimidine metabolism; CTP biosynthesis via de novo pathway; CTP from UDP: step 2/2. Allosterically activated by GTP, when glutamine is the substrate; GTP has no effect on the reaction when ammonia is the substrate. The allosteric effector GTP functions by stabilizing the protein conformation that binds the tetrahedral intermediate(s) formed during glutamine hydrolysis. Inhibited by the product CTP, via allosteric rather than competitive inhibition. Its function is as follows. Catalyzes the ATP-dependent amination of UTP to CTP with either L-glutamine or ammonia as the source of nitrogen. Regulates intracellular CTP levels through interactions with the four ribonucleotide triphosphates. The chain is CTP synthase from Corynebacterium jeikeium (strain K411).